We begin with the raw amino-acid sequence, 113 residues long: Large ribosomal subunit protein uL22 (113 aa).

It belongs to the universal ribosomal protein uL22 family. As to quaternary structure, part of the 50S ribosomal subunit.

Its function is as follows. This protein binds specifically to 23S rRNA; its binding is stimulated by other ribosomal proteins, e.g. L4, L17, and L20. It is important during the early stages of 50S assembly. It makes multiple contacts with different domains of the 23S rRNA in the assembled 50S subunit and ribosome. In terms of biological role, the globular domain of the protein is located near the polypeptide exit tunnel on the outside of the subunit, while an extended beta-hairpin is found that lines the wall of the exit tunnel in the center of the 70S ribosome. The protein is Large ribosomal subunit protein uL22 of Xanthomonas oryzae pv. oryzae (strain MAFF 311018).